A 190-amino-acid chain; its full sequence is 2-phospho-L-lactate guanylyltransferase (190 aa).

Belongs to the CofC family. As to quaternary structure, homodimer.

The enzyme catalyses (2S)-2-phospholactate + GTP + H(+) = (2S)-lactyl-2-diphospho-5'-guanosine + diphosphate. It functions in the pathway cofactor biosynthesis; coenzyme F420 biosynthesis. In terms of biological role, guanylyltransferase that catalyzes the activation of (2S)-2-phospholactate (2-PL) as (2S)-lactyl-2-diphospho-5'-guanosine, via the condensation of 2-PL with GTP. It is involved in the biosynthesis of coenzyme F420, a hydride carrier cofactor. The sequence is that of 2-phospho-L-lactate guanylyltransferase from Methanopyrus kandleri (strain AV19 / DSM 6324 / JCM 9639 / NBRC 100938).